The chain runs to 149 residues: Transcriptional repressor NrdR (149 aa).

The segment at 3-34 (CPFCGNRDTNVRDSRSVNEGTFIKRRRFCGEC) is a zinc-finger region. Residues 49–139 (IKVIKKNGSC…VYMNFENEKD (91 aa)) enclose the ATP-cone domain.

This sequence belongs to the NrdR family. Zn(2+) serves as cofactor.

In terms of biological role, negatively regulates transcription of bacterial ribonucleotide reductase nrd genes and operons by binding to NrdR-boxes. The protein is Transcriptional repressor NrdR of Neorickettsia sennetsu (strain ATCC VR-367 / Miyayama) (Ehrlichia sennetsu).